The chain runs to 156 residues: C-type lectin lectoxin-Phi1 (156 aa).

An N-terminal signal peptide occupies residues 1 to 23 (MGRFIFVSLGLLVLAFSLSGIGA). 3 disulfides stabilise this stretch: C27-C38, C55-C154, and C129-C146. A C-type lectin domain is found at 34-155 (HNVSCYKLIN…CNRRHRFLCK (122 aa)). N-linked (GlcNAc...) asparagine glycans are attached at residues N35 and N109. The Mannose-binding motif lies at 119–121 (EPN). Ca(2+)-binding residues include E127, N142, and D143.

Belongs to the true venom lectin family. In terms of tissue distribution, expressed by the venom gland.

It is found in the secreted. In terms of biological role, mannose-binding lectin which recognizes specific carbohydrate structures and agglutinates a variety of animal cells by binding to cell-surface glycoproteins and glycolipids. May be a calcium-dependent lectin. This Philodryas olfersii (Green snake) protein is C-type lectin lectoxin-Phi1.